A 378-amino-acid polypeptide reads, in one-letter code: 7-methylxanthine methyltransferase 1 (378 aa).

Residues Y18, C61, N66, D100, L101, S139, F140, and C156 each coordinate S-adenosyl-L-homocysteine. Y157, H160, and W161 together coordinate theobromine. The Mg(2+) site is built by N178, D260, F262, and N263. Residue Y362 coordinates theobromine.

The protein belongs to the methyltransferase superfamily. Type-7 methyltransferase family. Mg(2+) is required as a cofactor. In terms of tissue distribution, mainly expressed, at low levels, in leaves and fruits (grains). Also present, at lower levels, in roots, stamens and pistils.

It is found in the cytoplasm. The catalysed reaction is 7-methylxanthine + S-adenosyl-L-methionine = theobromine + S-adenosyl-L-homocysteine + H(+). It functions in the pathway alkaloid biosynthesis. Functionally, involved in the biosynthesis of caffeine. Catalyzes the conversion of 7-methylxanthine (7mX) to theobromine and of paraxanthine to caffeine. This Coffea canephora (Robusta coffee) protein is 7-methylxanthine methyltransferase 1.